The primary structure comprises 500 residues: Lysine--tRNA ligase (500 aa).

Residues glutamate 407 and glutamate 414 each contribute to the Mg(2+) site.

The protein belongs to the class-II aminoacyl-tRNA synthetase family. As to quaternary structure, homodimer. It depends on Mg(2+) as a cofactor.

The protein localises to the cytoplasm. It catalyses the reaction tRNA(Lys) + L-lysine + ATP = L-lysyl-tRNA(Lys) + AMP + diphosphate. The protein is Lysine--tRNA ligase of Azobacteroides pseudotrichonymphae genomovar. CFP2.